The following is a 311-amino-acid chain: Geranylgeranyl transferase type-2 subunit beta (311 aa).

PFTB repeat units lie at residues 54-95 (KERI…AMLD), 102-143 (KDKV…AILG), 150-191 (KNTA…KILN), 197-239 (DEEL…AIIG), and 246-288 (RNQL…SLLQ). Geranylgeranyl diphosphate contacts are provided by residues 176–178 (HGA) and 218–230 (RPEKLPDSCYGWW). Residues Asp-224, Cys-226, and His-276 each coordinate Zn(2+).

The protein belongs to the protein prenyltransferase subunit beta family. As to quaternary structure, heterodimer of an alpha and a beta subunit. Zn(2+) serves as cofactor.

The enzyme catalyses geranylgeranyl diphosphate + L-cysteinyl-[protein] = S-geranylgeranyl-L-cysteinyl-[protein] + diphosphate. In terms of biological role, catalyzes the transfer of a geranyl-geranyl moiety from geranyl-geranyl pyrophosphate to proteins having the C-terminal -XCC or -XCXC, where both cysteines may become modified. This chain is Geranylgeranyl transferase type-2 subunit beta (ptb1), found in Schizosaccharomyces pombe (strain 972 / ATCC 24843) (Fission yeast).